We begin with the raw amino-acid sequence, 358 residues long: Phosphoserine aminotransferase (358 aa).

Arg-41 serves as a coordination point for L-glutamate. Pyridoxal 5'-phosphate contacts are provided by residues Ala-75–Ser-76, Trp-100, Thr-148, Asp-167, and Gln-190. Lys-191 carries the N6-(pyridoxal phosphate)lysine modification. Asn-233–Thr-234 lines the pyridoxal 5'-phosphate pocket.

The protein belongs to the class-V pyridoxal-phosphate-dependent aminotransferase family. SerC subfamily. As to quaternary structure, homodimer. The cofactor is pyridoxal 5'-phosphate.

The protein resides in the cytoplasm. The enzyme catalyses O-phospho-L-serine + 2-oxoglutarate = 3-phosphooxypyruvate + L-glutamate. It catalyses the reaction 4-(phosphooxy)-L-threonine + 2-oxoglutarate = (R)-3-hydroxy-2-oxo-4-phosphooxybutanoate + L-glutamate. Its pathway is amino-acid biosynthesis; L-serine biosynthesis; L-serine from 3-phospho-D-glycerate: step 2/3. The protein operates within cofactor biosynthesis; pyridoxine 5'-phosphate biosynthesis; pyridoxine 5'-phosphate from D-erythrose 4-phosphate: step 3/5. Its function is as follows. Catalyzes the reversible conversion of 3-phosphohydroxypyruvate to phosphoserine and of 3-hydroxy-2-oxo-4-phosphonooxybutanoate to phosphohydroxythreonine. This Campylobacter jejuni subsp. jejuni serotype O:23/36 (strain 81-176) protein is Phosphoserine aminotransferase.